The primary structure comprises 104 residues: Larval cuticle protein 65Ab1 (104 aa).

The N-terminal stretch at 1–18 is a signal peptide; sequence MKFLIVFVALFAMAVARP. In terms of domain architecture, Chitin-binding type R&amp;R spans 32-102; sequence PEKWSSDVET…PQGAHLPVAP (71 aa).

Component of the cuticle of the larva. The chain is Larval cuticle protein 65Ab1 from Drosophila melanogaster (Fruit fly).